The sequence spans 793 residues: Splicing factor 3A subunit 1 (793 aa).

A disordered region spans residues 1 to 43; sequence MPAGPVQAVPPPPPVPTEPKQPTEEEASSKEDSAPSKPVVGII. Residues 8–19 are compositionally biased toward pro residues; sequence AVPPPPPVPTEP. Lysine 20 participates in a covalent cross-link: Glycyl lysine isopeptide (Lys-Gly) (interchain with G-Cter in SUMO2). Basic and acidic residues predominate over residues 21–34; that stretch reads QPTEEEASSKEDSA. An SURP motif 1 repeat occupies 52 to 94; sequence IVDKTASFVARNGPEFEARIRQNEINNPKFNFLNPNDPYHAYY. Lysine 55 bears the N6-acetyllysine mark. A Glycyl lysine isopeptide (Lys-Gly) (interchain with G-Cter in SUMO2) cross-link involves residue lysine 131. Residues 166-208 form an SURP motif 2 repeat; that stretch reads VVKLTAQFVARNGRQFLTQLMQKEQRNYQFDFLRPQHSLFNYF. The tract at residues 318–428 is disordered; sequence GESEEVEMEV…KIPASKMQEH (111 aa). Residues serine 320, serine 329, and serine 359 each carry the phosphoserine modification. Composition is skewed to acidic residues over residues 320–334 and 354–364; these read SEEV…EEDD and DMDEGSDDEEE. The span at 368–384 shows a compositional bias: pro residues; the sequence is VPPPPETPMPPPLPPTP. Over residues 388-397 the composition is skewed to basic and acidic residues; that stretch reads IVRKDYDPKA. Position 413 is a phosphoserine (serine 413). Residue lysine 424 forms a Glycyl lysine isopeptide (Lys-Gly) (interchain with G-Cter in SUMO2) linkage. Residue serine 451 is modified to Phosphoserine. The residue at position 456 (tyrosine 456) is a Phosphotyrosine. The span at 488-502 shows a compositional bias: basic and acidic residues; the sequence is IGEEEIQKPEEKVTW. Disordered stretches follow at residues 488–518, 530–584, and 665–688; these read IGEE…AAQA, HKAK…TMPP, and APMP…LKTE. Lysine 499 is covalently cross-linked (Glycyl lysine isopeptide (Lys-Gly) (interchain with G-Cter in SUMO2)). At serine 508 the chain carries Phosphoserine. Residues 509 to 518 show a composition bias toward polar residues; sequence MARTQQAAQA. Lysine 542 participates in a covalent cross-link: Glycyl lysine isopeptide (Lys-Gly) (interchain with G-Cter in SUMO2). Residues 665 to 675 show a composition bias toward pro residues; that stretch reads APMPPVHPPPP. Residues 680–702 are required and sufficient for nuclear import; it reads PTSKKLKTEDSLMPEEEFLRRNK. Lysine 686 is covalently cross-linked (Glycyl lysine isopeptide (Lys-Gly) (interchain with G-Cter in SUMO2)). The region spanning 707 to 793 is the Ubiquitin-like domain; that stretch reads IKVQVPNMQD…ALKERGGRKK (87 aa). Tyrosine 759 is modified (phosphotyrosine).

As to quaternary structure, component of the 17S U2 SnRNP complex, a ribonucleoprotein complex that contains small nuclear RNA (snRNA) U2 and a number of specific proteins. Part of the SF3A subcomplex of the 17S U2 SnRNP complex which is composed of three subunits; SF3A3/SAP61, SF3A2/SAP62 and SF3A1/SAP114. SF3A associates with the splicing factor SF3B and a 12S RNA unit to form the mature 17S U2 small nuclear ribonucleoprotein complex (17S U2 snRNP). SF3A1 functions as a scaffold that interacts directly with both SF3A2 and SF3A3. Identified in the spliceosome 'E' complex, a precursor of the spliceosome 'A' complex. Identified in the spliceosome 'A' and 'B' complexes. Identified in the spliceosome 'C' complex. Interacts with P2RX6; resulting in a reduction of the splicing activity. As to expression, ubiquitously expressed.

It localises to the nucleus. The protein resides in the nucleus speckle. Functionally, component of the 17S U2 SnRNP complex of the spliceosome, a large ribonucleoprotein complex that removes introns from transcribed pre-mRNAs. The 17S U2 SnRNP complex (1) directly participates in early spliceosome assembly and (2) mediates recognition of the intron branch site during pre-mRNA splicing by promoting the selection of the pre-mRNA branch-site adenosine, the nucleophile for the first step of splicing. Within the 17S U2 SnRNP complex, SF3A1 is part of the SF3A subcomplex that contributes to the assembly of the 17S U2 snRNP, and the subsequent assembly of the pre-spliceosome 'E' complex and the pre-catalytic spliceosome 'A' complex. Involved in pre-mRNA splicing as a component of pre-catalytic spliceosome 'B' complexes. The chain is Splicing factor 3A subunit 1 (SF3A1) from Homo sapiens (Human).